A 142-amino-acid polypeptide reads, in one-letter code: Large ribosomal subunit protein bL17 (142 aa).

This sequence belongs to the bacterial ribosomal protein bL17 family. As to quaternary structure, part of the 50S ribosomal subunit. Contacts protein L32.

The chain is Large ribosomal subunit protein bL17 from Protochlamydia amoebophila (strain UWE25).